The following is a 151-amino-acid chain: Large ribosomal subunit protein bL9 (151 aa).

Belongs to the bacterial ribosomal protein bL9 family.

In terms of biological role, binds to the 23S rRNA. The sequence is that of Large ribosomal subunit protein bL9 from Prochlorococcus marinus (strain MIT 9301).